Here is a 243-residue protein sequence, read N- to C-terminus: Voltage-gated monoatomic cation channel TMEM109 (243 aa).

The first 33 residues, 1-33 (MAASSISSPWGKHVFKAILMVLVALILLHSALA), serve as a signal peptide directing secretion. Residues 34-83 (QSRRDFAPPGQQKREAPVDVLTQIGRSVRGTLDAWIGPETMHLVSESSSQ) lie on the Lumenal side of the membrane. A helical membrane pass occupies residues 84-104 (VLWAISSAISVAFFALSGIAA). At 105-135 (QLLNALGLAGDYLAQGLKLSPGQVQTFLLWG) the chain is on the cytoplasmic side. A helical transmembrane segment spans residues 136–156 (AGALVVYWLLSLLLGLVLALL). Residues 157–185 (GRILWGLKLVIFLAGFVALMRSVPDPSTR) lie on the Lumenal side of the membrane. Residues 186–205 (ALLLLALLILYALLSRLTGS) traverse the membrane as a helical segment. At 206 to 243 (RASGAQLEAKVRGLERQVEELRWRQRRAAKGARSVEEE) the chain is on the cytoplasmic side.

As to quaternary structure, homooligomer. Interacts with CRYAB; in the cellular response to DNA damage.

The protein localises to the nucleus outer membrane. The protein resides in the endoplasmic reticulum membrane. Its subcellular location is the sarcoplasmic reticulum membrane. The catalysed reaction is K(+)(in) = K(+)(out). It catalyses the reaction Ca(2+)(in) = Ca(2+)(out). In terms of biological role, functions as a voltage-gated monoatomic cation channel permeable to both potassium and calcium. Plays a role in the cellular response to DNA damage. This is Voltage-gated monoatomic cation channel TMEM109 from Homo sapiens (Human).